Consider the following 145-residue polypeptide: Putative pre-16S rRNA nuclease (145 aa).

Belongs to the YqgF nuclease family.

Its subcellular location is the cytoplasm. Its function is as follows. Could be a nuclease involved in processing of the 5'-end of pre-16S rRNA. This is Putative pre-16S rRNA nuclease from Pseudomonas fluorescens (strain ATCC BAA-477 / NRRL B-23932 / Pf-5).